A 510-amino-acid polypeptide reads, in one-letter code: MIWHVQNENFILDSTRIFMKAFHLLFFDGSLIFPECILIFGLILLLMIDSTSDQKDIPWLYFISSTSLVMSITALLFRWREEPMISFSGNFQTNNFNEIFQFLILLCSTLCIPLSVEYIECTEMAITEFLLFVLTATIGGMFLCGANDLITIFVAPECFSLCSYLLSGYTKKDVRSNEATMKYLLMGGASSSILVHGFSWLYGSSGGEIELQEIVNGLINTQMYNSPGISIALIFITVGIGFKLSPAPSHQWTPDVYEGSPTPVVAFLSVTSKVAASASATRIFDIPFYFSSNEWHLLLEILAILSMILGNLIAITQTSMKRMLAYSSIGQIGYVIIGIIVGDSNDGYASMITYMLFYISMNLGTFACIVLFGLRTGTENIRDYAGLYTKDPFLALSLALCLLSLGGLPPLAGFFGKLYLFWCGWQAGLYFLVLIGLLTSVVSIYYYLKIIKLLMTGRNQEITPHVRNYRRSPLRSNNSIELSMIVCVIASTIPGISMNPIIAIAQDTLF.

Transmembrane regions (helical) follow at residues 24-44, 57-77, 99-119, 124-144, 149-169, 183-203, 227-247, 295-315, 323-343, 354-374, 395-415, 418-438, and 484-504; these read LLFF…GLIL, IPWL…ALLF, IFQF…VEYI, MAIT…MFLC, LITI…LSGY, YLLM…WLYG, PGIS…LSPA, WHLL…LIAI, MLAY…IVGD, YMLF…LFGL, ALSL…AGFF, LYLF…IGLL, and MIVC…IIAI.

This sequence belongs to the complex I subunit 2 family. As to quaternary structure, NDH is composed of at least 16 different subunits, 5 of which are encoded in the nucleus.

It is found in the plastid. Its subcellular location is the chloroplast thylakoid membrane. The enzyme catalyses a plastoquinone + NADH + (n+1) H(+)(in) = a plastoquinol + NAD(+) + n H(+)(out). It carries out the reaction a plastoquinone + NADPH + (n+1) H(+)(in) = a plastoquinol + NADP(+) + n H(+)(out). Functionally, NDH shuttles electrons from NAD(P)H:plastoquinone, via FMN and iron-sulfur (Fe-S) centers, to quinones in the photosynthetic chain and possibly in a chloroplast respiratory chain. The immediate electron acceptor for the enzyme in this species is believed to be plastoquinone. Couples the redox reaction to proton translocation, and thus conserves the redox energy in a proton gradient. The polypeptide is NAD(P)H-quinone oxidoreductase subunit 2 B, chloroplastic (Guizotia abyssinica (Niger)).